A 244-amino-acid chain; its full sequence is MRNVKLIIEYDGTNYHGWQKQKNAKTVQDTIERAIKGLTGEKVDLIGASRTDFGVHALGQVANFITNSGIPGDRFSYALNRMLPDDIVIKESQEVDMDFHARYKAKGKRYRYLIYNSQFPSALLRHRTYHVSHKLDFESMQRAASYFLGTHDFSAFRSSGSSAKTSVRTITDVSLEREDKIVKFEIAGDGFLYNMVRIIVGTLMEVGIGKIRADEIPQIIESRKRKRAGRTAPAEGLYLVEVYY.

Residue Asp52 is the Nucleophile of the active site. Tyr110 is a substrate binding site.

The protein belongs to the tRNA pseudouridine synthase TruA family. Homodimer.

The catalysed reaction is uridine(38/39/40) in tRNA = pseudouridine(38/39/40) in tRNA. Its function is as follows. Formation of pseudouridine at positions 38, 39 and 40 in the anticodon stem and loop of transfer RNAs. The chain is tRNA pseudouridine synthase A from Acetivibrio thermocellus (strain ATCC 27405 / DSM 1237 / JCM 9322 / NBRC 103400 / NCIMB 10682 / NRRL B-4536 / VPI 7372) (Clostridium thermocellum).